We begin with the raw amino-acid sequence, 110 residues long: U1-lycotoxin-Ls1jj (110 aa).

Positions 1–20 are cleaved as a signal peptide; it reads MKFVLLFGVLLVTLFSYSSA. Residues 21 to 44 constitute a propeptide that is removed on maturation; the sequence is EMLDDFDQADEDELLSLIEKEEAR. Disulfide bonds link C47/C62, C54/C71, C61/C89, and C73/C87.

It belongs to the neurotoxin 19 (CSTX) family. 03 subfamily. Expressed by the venom gland.

It is found in the secreted. In Lycosa singoriensis (Wolf spider), this protein is U1-lycotoxin-Ls1jj.